The following is a 368-amino-acid chain: 3-dehydroquinate synthase (368 aa).

NAD(+) is bound by residues 110 to 114 (GVIGD), 134 to 135 (TS), lysine 147, and lysine 156. Residues glutamate 189, histidine 254, and histidine 271 each coordinate Zn(2+).

It belongs to the sugar phosphate cyclases superfamily. Dehydroquinate synthase family. NAD(+) serves as cofactor. Co(2+) is required as a cofactor. Requires Zn(2+) as cofactor.

The protein resides in the cytoplasm. It catalyses the reaction 7-phospho-2-dehydro-3-deoxy-D-arabino-heptonate = 3-dehydroquinate + phosphate. It functions in the pathway metabolic intermediate biosynthesis; chorismate biosynthesis; chorismate from D-erythrose 4-phosphate and phosphoenolpyruvate: step 2/7. Functionally, catalyzes the conversion of 3-deoxy-D-arabino-heptulosonate 7-phosphate (DAHP) to dehydroquinate (DHQ). The chain is 3-dehydroquinate synthase from Thermosynechococcus vestitus (strain NIES-2133 / IAM M-273 / BP-1).